The primary structure comprises 832 residues: Protein translocase subunit SecA (832 aa).

Residues glutamine 87, glycine 105–threonine 109, and aspartate 512 contribute to the ATP site.

The protein belongs to the SecA family. Monomer and homodimer. Part of the essential Sec protein translocation apparatus which comprises SecA, SecYEG and auxiliary proteins SecDF-YajC and YidC.

The protein localises to the cell membrane. Its subcellular location is the cytoplasm. The catalysed reaction is ATP + H2O + cellular proteinSide 1 = ADP + phosphate + cellular proteinSide 2.. Functionally, part of the Sec protein translocase complex. Interacts with the SecYEG preprotein conducting channel. Has a central role in coupling the hydrolysis of ATP to the transfer of proteins into and across the cell membrane, serving as an ATP-driven molecular motor driving the stepwise translocation of polypeptide chains across the membrane. The polypeptide is Protein translocase subunit SecA (Wigglesworthia glossinidia brevipalpis).